The sequence spans 282 residues: uncharacterized protein (282 aa).

Helical transmembrane passes span 18 to 38 (PIVL…WAGT), 40 to 60 (LLVV…VTIG), 87 to 107 (LWIV…TPVV), 119 to 139 (ALHF…GAMV), 164 to 184 (IPVD…PMLI), and 260 to 280 (VTLA…SLIL).

Belongs to the CbiQ family.

The protein localises to the cell membrane. This is an uncharacterized protein from Mycobacterium tuberculosis (strain CDC 1551 / Oshkosh).